A 313-amino-acid chain; its full sequence is Aspartoacylase (313 aa).

2 residues coordinate Zn(2+): His-21 and Glu-24. N-acetyl-L-aspartate-binding residues include Arg-63, Asn-70, and Arg-71. His-116 contacts Zn(2+). Residues Tyr-164 and Arg-168 each coordinate N-acetyl-L-aspartate. The active-site Proton donor/acceptor is the Glu-178. Tyr-288 contributes to the N-acetyl-L-aspartate binding site.

It belongs to the AspA/AstE family. Aspartoacylase subfamily. Homodimer. Requires Zn(2+) as cofactor.

The protein localises to the cytoplasm. It is found in the nucleus. It carries out the reaction an N-acyl-L-aspartate + H2O = a carboxylate + L-aspartate. The enzyme catalyses N-acetyl-L-aspartate + H2O = L-aspartate + acetate. Its function is as follows. Catalyzes the deacetylation of N-acetylaspartic acid (NAA) to produce acetate and L-aspartate. NAA occurs in high concentration in brain and its hydrolysis NAA plays a significant part in the maintenance of intact white matter. In other tissues it acts as a scavenger of NAA from body fluids. The chain is Aspartoacylase from Pongo abelii (Sumatran orangutan).